The sequence spans 233 residues: Orotidine 5'-phosphate decarboxylase (233 aa).

Residues D13, K35, 62–71, T122, R182, Q191, G211, and R212 contribute to the substrate site; that span reads DLKFHDIPNT. K64 acts as the Proton donor in catalysis.

Belongs to the OMP decarboxylase family. Type 1 subfamily. As to quaternary structure, homodimer.

The catalysed reaction is orotidine 5'-phosphate + H(+) = UMP + CO2. Its pathway is pyrimidine metabolism; UMP biosynthesis via de novo pathway; UMP from orotate: step 2/2. Its function is as follows. Catalyzes the decarboxylation of orotidine 5'-monophosphate (OMP) to uridine 5'-monophosphate (UMP). In Pseudomonas putida (strain ATCC 700007 / DSM 6899 / JCM 31910 / BCRC 17059 / LMG 24140 / F1), this protein is Orotidine 5'-phosphate decarboxylase.